The following is a 271-amino-acid chain: Hydroxyethylthiazole kinase (271 aa).

Methionine 50 is a substrate binding site. ATP-binding residues include arginine 126 and threonine 172. Glycine 199 contacts substrate.

The protein belongs to the Thz kinase family. Mg(2+) serves as cofactor.

It carries out the reaction 5-(2-hydroxyethyl)-4-methylthiazole + ATP = 4-methyl-5-(2-phosphooxyethyl)-thiazole + ADP + H(+). Its pathway is cofactor biosynthesis; thiamine diphosphate biosynthesis; 4-methyl-5-(2-phosphoethyl)-thiazole from 5-(2-hydroxyethyl)-4-methylthiazole: step 1/1. Functionally, catalyzes the phosphorylation of the hydroxyl group of 4-methyl-5-beta-hydroxyethylthiazole (THZ). This chain is Hydroxyethylthiazole kinase, found in Akkermansia muciniphila (strain ATCC BAA-835 / DSM 22959 / JCM 33894 / BCRC 81048 / CCUG 64013 / CIP 107961 / Muc).